The sequence spans 44 residues: Small ribosomal subunit protein eS7 (44 aa).

The segment covering 18 to 34 (KPTRKSRIKNKQKRPRS) has biased composition (basic residues). Residues 18–44 (KPTRKSRIKNKQKRPRSRTLTAVHDAI) are disordered.

It belongs to the eukaryotic ribosomal protein eS7 family. In terms of assembly, component of the small ribosomal subunit.

It localises to the cytoplasm. The protein localises to the cytoskeleton. The protein resides in the microtubule organizing center. It is found in the centrosome. Its subcellular location is the nucleus. In terms of biological role, component of the small ribosomal subunit. The ribosome is a large ribonucleoprotein complex responsible for the synthesis of proteins in the cell. Required for rRNA maturation. In Salmo salar (Atlantic salmon), this protein is Small ribosomal subunit protein eS7 (rps7).